A 206-amino-acid polypeptide reads, in one-letter code: TPR repeat-containing protein YrrB (206 aa).

TPR repeat units lie at residues 1–23 (MQEG…NKED), 24–57 (AIPY…DSSA), 59–91 (TAYY…GMEN), 93–125 (DLFY…NEND), 127–159 (EARF…DPGH), and 160–193 (ADAF…QPDH).

Monomer.

In terms of biological role, could be an interacting mediator in the complex formation among RNA sulfuration components, RNA processing components, and aminoacyl-tRNA synthetases. The chain is TPR repeat-containing protein YrrB (yrrB) from Bacillus subtilis (strain 168).